The chain runs to 299 residues: Sulfate adenylyltransferase subunit 2 (299 aa).

Belongs to the PAPS reductase family. CysD subfamily. In terms of assembly, sulfate-activating enzymes, NodP and NodQ, may be physically associated.

It catalyses the reaction sulfate + ATP + H(+) = adenosine 5'-phosphosulfate + diphosphate. Proposed to provide activated sulfate for transfer to nod factor. This is Sulfate adenylyltransferase subunit 2 (nodP) from Rhizobium tropici.